Reading from the N-terminus, the 150-residue chain is Putative biopolymer transport protein ExbB-like 2 (150 aa).

Transmembrane regions (helical) follow at residues 5-25, 63-83, and 97-117; these read VDYG…AIAI, APYI…MDLG, and LALA…AIVI.

This sequence belongs to the ExbB/TolQ family.

It is found in the cell inner membrane. The protein is Putative biopolymer transport protein ExbB-like 2 of Helicobacter pylori (strain ATCC 700392 / 26695) (Campylobacter pylori).